The sequence spans 926 residues: Translation initiation factor IF-2 (926 aa).

2 disordered regions span residues Met-1 to Glu-185 and Glu-200 to Gly-299. Low complexity-rich tracts occupy residues Thr-13–Gly-24 and Ala-70–Gln-96. The span at Thr-110–Arg-133 shows a compositional bias: polar residues. Positions Met-151–Glu-185 are enriched in basic and acidic residues. Residues Ala-211–Ser-251 are compositionally biased toward low complexity. A tr-type G domain is found at Ser-424–Asp-591. The tract at residues Gly-433 to Thr-440 is G1. Gly-433–Thr-440 is a binding site for GTP. Residues Gly-458 to His-462 are G2. The G3 stretch occupies residues Asp-479–Gly-482. GTP-binding positions include Asp-479–His-483 and Asn-533–Asp-536. The G4 stretch occupies residues Asn-533–Asp-536. Residues Ser-569–Lys-571 form a G5 region.

This sequence belongs to the TRAFAC class translation factor GTPase superfamily. Classic translation factor GTPase family. IF-2 subfamily.

It localises to the cytoplasm. Functionally, one of the essential components for the initiation of protein synthesis. Protects formylmethionyl-tRNA from spontaneous hydrolysis and promotes its binding to the 30S ribosomal subunits. Also involved in the hydrolysis of GTP during the formation of the 70S ribosomal complex. The polypeptide is Translation initiation factor IF-2 (Allorhizobium ampelinum (strain ATCC BAA-846 / DSM 112012 / S4) (Agrobacterium vitis (strain S4))).